Reading from the N-terminus, the 591-residue chain is Paxillin (591 aa).

An N-acetylmethionine modification is found at Met-1. An LD motif 1 motif is present at residues 3 to 15 (DLDALLADLESTT). The tract at residues 17–138 (HISKRPVFLS…SSPTVMSTSL (122 aa)) is disordered. Tyr-31 carries the phosphotyrosine; by PTK6 modification. The segment covering 45-54 (VPPPVPPPPS) has biased composition (pro residues). Positions 69–101 (WQPSGSRFIHQQPQSSSPVYGSSAKTSSVSNPQ) are enriched in polar residues. Residues Ser-83 and Ser-85 each carry the phosphoserine modification. Tyr-88 carries the phosphotyrosine modification. Position 106 is a phosphoserine (Ser-106). Tyr-118 is modified (phosphotyrosine; by PTK6). Residues Ser-119, Ser-126, and Ser-130 each carry the phosphoserine modification. A compositionally biased stretch (polar residues) spans 121-137 (PNKQKSAESSPTVMSTS). Residue Thr-132 is modified to Phosphothreonine. Phosphoserine is present on residues Ser-137, Ser-140, and Ser-143. Positions 144-156 (ELDRLLLELNAVQ) match the LD motif 2 motif. The disordered stretch occupies residues 156–213 (QHNPPGFPADEANSGPPLPGALSPHYGVPETNSPLGGKAGPLTKEKPKRNGGRGLEDV). At Tyr-181 the chain carries Phosphotyrosine. The short motif at 216 to 228 (SVESLLDELESSV) is the LD motif 3 element. Ser-230 is modified (phosphoserine). Residues 237–260 (VNQGEMSSPQRVTSTQQQTRISAS) are disordered. Ser-244 bears the Phosphoserine; by CDK5 mark. Ser-250, Ser-258, Ser-261, and Ser-272 each carry phosphoserine. The short motif at 265-276 (ELDELMASLSDF) is the LD motif 4 element. Residues 289–300 (RCWAADWPRDGG) show a composition bias toward basic and acidic residues. The tract at residues 289–335 (RCWAADWPRDGGRSSPGGQDEGGFMAQGKTGSSSPPGGPPKPGSQLD) is disordered. Phosphoserine occurs at positions 303, 322, 332, and 340. The LD motif 5 signature appears at 333-345 (QLDSMLGSLQSDL). 4 LIM zinc-binding domains span residues 356–415 (GVCG…LFSP), 416–473 (RCYY…DMFA), 474–533 (PKCG…RRGS), and 534–591 (LCSG…KLFC). Residue Ser-533 is modified to Phosphoserine.

It belongs to the paxillin family. Binds to vinculin and to the SH3 domain of SRC. Interacts with GIT1, NUDT16L1/SDOS, PARVA, PARVB, SORBS1 and TGFB1I1. Component of cytoplasmic complexes, which also contain GIT1, ARHGEF6 and PAK1. Binds ASAP2. Interacts with RNF5 and PDCD10. Interacts with NEK3 and this interaction is prolactin-dependent. Interacts with PTK2/FAK1 and PTK2B/PYK2. Interacts with PTK6. Interacts with CD36. Interacts (via cytoplasmic domain) with CEACAM1; the interaction is phosphotyrosyl-dependent. Interacts with PXN; this complex stabilizes actin dynamics. Interacts with TRIM15. Interacts with PAK4; PAK4 acts as a scaffold to suppport PAXI phosphorylation at Ser-272. Phosphorylated by MAPK1/ERK2. Phosphorylated on tyrosine residues during integrin-mediated cell adhesion, embryonic development, fibroblast transformation and following stimulation of cells by mitogens. Phosphorylation at Ser-244 by CDK5 reduces its interaction with PTK2/FAK1 in matrix-cell focal adhesions (MCFA) during oligodendrocytes (OLs) differentiation. Phosphorylation at Tyr-31 and Tyr-118 by PTK6 promote the activation of RAC1 via CRK/CrKII, thereby promoting migration and invasion. Phosphorylation at Ser-250 by SLK is required for PXN redistribution and cell motility. Phosphorylation at Ser-272 promotes focal adhesion disassembly during cell migration.

It localises to the cytoplasm. The protein resides in the cytoskeleton. The protein localises to the cell junction. It is found in the focal adhesion. Its subcellular location is the cell cortex. Cytoskeletal protein involved in actin-membrane attachment at sites of cell adhesion to the extracellular matrix (focal adhesion). Recruits other proteins such as TRIM15 to focal adhesion. The chain is Paxillin (PXN) from Pongo abelii (Sumatran orangutan).